The chain runs to 307 residues: Ornithine carbamoyltransferase (307 aa).

Residues 50 to 53, Q77, R101, and 128 to 131 contribute to the carbamoyl phosphate site; these read STRT and HPCQ. L-ornithine contacts are provided by residues N160, D224, and 228–229; that span reads SM. Carbamoyl phosphate-binding positions include 264 to 265 and R292; that span reads CL.

It belongs to the aspartate/ornithine carbamoyltransferase superfamily. OTCase family.

It is found in the cytoplasm. It catalyses the reaction carbamoyl phosphate + L-ornithine = L-citrulline + phosphate + H(+). The protein operates within amino-acid biosynthesis; L-arginine biosynthesis; L-arginine from L-ornithine and carbamoyl phosphate: step 1/3. Functionally, reversibly catalyzes the transfer of the carbamoyl group from carbamoyl phosphate (CP) to the N(epsilon) atom of ornithine (ORN) to produce L-citrulline. This is Ornithine carbamoyltransferase from Clavibacter sepedonicus (Clavibacter michiganensis subsp. sepedonicus).